Consider the following 295-residue polypeptide: Ethanolamine ammonia-lyase small subunit (295 aa).

Residues V209 and E230 each contribute to the adenosylcob(III)alamin site.

The protein belongs to the EutC family. In terms of assembly, the basic unit is a heterodimer which dimerizes to form tetramers. The heterotetramers trimerize; 6 large subunits form a core ring with 6 small subunits projecting outwards. The cofactor is adenosylcob(III)alamin.

Its subcellular location is the bacterial microcompartment. The catalysed reaction is ethanolamine = acetaldehyde + NH4(+). It participates in amine and polyamine degradation; ethanolamine degradation. In terms of biological role, catalyzes the deamination of various vicinal amino-alcohols to oxo compounds. Allows this organism to utilize ethanolamine as the sole source of nitrogen and carbon in the presence of external vitamin B12. This is Ethanolamine ammonia-lyase small subunit from Clostridium perfringens (strain ATCC 13124 / DSM 756 / JCM 1290 / NCIMB 6125 / NCTC 8237 / Type A).